The sequence spans 587 residues: MSLFKVYARALRYLGAYKLRVSLVVIANIVLATITIAEPILFGRIIDAISGKGEVKPILFMWAAFAVFNTVAFVLVSREADRLAHGRRATLLTEAFGRIISMPLAWHHQRGTSNALHTLLRACETLFGLWLEFMRNHLSTVIALALLVPTAMSMDLRLSAVLIVLGIAYWLIGRVVMSRTKDGQASVENHYHTVFSHVSDSISNVSVLHSYNRIEAETKALKSFANRLLEAQYPVLDWWALASALNRMASTIAMMVVLIIGTMLVQSGELRIGDVIAFIGFANLLIARLDLMRQFATQIFEARSKLEDFYTLEDSVRDREEPAGNGEIKNVKGAIEFRDVSFGFGNSSQGLHNVSFSVKAGQTVAIVGPTGAGKTTLVNLLQRVYDPQGGQILVDGTDITKVTRKSLRRHIATVFQDAGLLNRSISDNIRLGREGASEEDMRRAAEAAAAADFIETREDRYDTHVGERGNKLSGGERQRIAIARAILKDAPILVLDEATSALDVETEARVKAAIDNLRQNRTTFIIAHRLSTVREADMVLFLDDGRVVEQGGFDELSHSNGRFAALLRASGILTDEEVRKAHTTEAA.

The ABC transmembrane type-1 domain maps to 21–301; it reads VSLVVIANIV…MRQFATQIFE (281 aa). A run of 6 helical transmembrane segments spans residues 23–43, 57–77, 126–146, 158–178, 248–268, and 272–292; these read LVVIANIVLATITIAEPILFG, PILFMWAAFAVFNTVAFVLVS, LFGLWLEFMRNHLSTVIALAL, LSAVLIVLGIAYWLIGRVVMS, MASTIAMMVVLIIGTMLVQSG, and IGDVIAFIGFANLLIARLDLM. An ABC transporter domain is found at 335-569; sequence IEFRDVSFGF…NGRFAALLRA (235 aa). 368–375 provides a ligand contact to ATP; that stretch reads GPTGAGKT.

It belongs to the ABC transporter superfamily. Beta-(1--&gt;2)glucan exporter (TC 3.A.1.108.1) family. Homodimer.

The protein resides in the cell inner membrane. It carries out the reaction [(1-&gt;2)-beta-D-glucosyl](n)(in) + ATP + H2O = [(1-&gt;2)-beta-D-glucosyl](n)(out) + ADP + phosphate + H(+). In terms of biological role, involved in beta-(1--&gt;2)glucan export. Transmembrane domains (TMD) form a pore in the inner membrane and the ATP-binding domain (NBD) is responsible for energy generation. In Rhizobium etli (strain ATCC 51251 / DSM 11541 / JCM 21823 / NBRC 15573 / CFN 42), this protein is Beta-(1--&gt;2)glucan export ATP-binding/permease protein NdvA.